Reading from the N-terminus, the 89-residue chain is MALSAESKAALVKEFQVAEGDTGSPEVQVALLTKNIEGLQGHFKAHIHDHHSRRGLIRMVNQRRKLLDYLKRKDAARYTSLIKKLGLRR.

It belongs to the universal ribosomal protein uS15 family. In terms of assembly, part of the 30S ribosomal subunit. Forms a bridge to the 50S subunit in the 70S ribosome, contacting the 23S rRNA.

One of the primary rRNA binding proteins, it binds directly to 16S rRNA where it helps nucleate assembly of the platform of the 30S subunit by binding and bridging several RNA helices of the 16S rRNA. Its function is as follows. Forms an intersubunit bridge (bridge B4) with the 23S rRNA of the 50S subunit in the ribosome. In Marinomonas sp. (strain MWYL1), this protein is Small ribosomal subunit protein uS15.